The following is a 178-amino-acid chain: Chorion class high-cysteine HCB protein 13 (178 aa).

An N-terminal signal peptide occupies residues 1-21 (MAAKLILFVCAIALVAQSVLG). The tract at residues 22-46 (TGCGCCCRGCGCGCGGCGSRCCDRF) is left arm. A central domain region spans residues 47–110 (CLCSNSAAPT…GDGCVGITQS (64 aa)). The segment at 111 to 178 (CGGCGCGCGG…GCGCGGCGCC (68 aa)) is right arm (Gly-rich tandem repeats).

It belongs to the chorion protein family.

This protein is one of many from the eggshell of the silk moth. In Bombyx mori (Silk moth), this protein is Chorion class high-cysteine HCB protein 13.